The sequence spans 159 residues: 2-C-methyl-D-erythritol 2,4-cyclodiphosphate synthase (159 aa).

A divalent metal cation-binding residues include D8 and H10. 4-CDP-2-C-methyl-D-erythritol 2-phosphate contacts are provided by residues 8–10 (DVH) and 34–35 (HS). Residue H42 participates in a divalent metal cation binding. 4-CDP-2-C-methyl-D-erythritol 2-phosphate is bound by residues 56–58 (DIG), 61–65 (FPDTD), 100–106 (AQAPKML), 132–135 (TTTE), F139, and R142.

This sequence belongs to the IspF family. Homotrimer. The cofactor is a divalent metal cation.

It carries out the reaction 4-CDP-2-C-methyl-D-erythritol 2-phosphate = 2-C-methyl-D-erythritol 2,4-cyclic diphosphate + CMP. It functions in the pathway isoprenoid biosynthesis; isopentenyl diphosphate biosynthesis via DXP pathway; isopentenyl diphosphate from 1-deoxy-D-xylulose 5-phosphate: step 4/6. Functionally, involved in the biosynthesis of isopentenyl diphosphate (IPP) and dimethylallyl diphosphate (DMAPP), two major building blocks of isoprenoid compounds. Catalyzes the conversion of 4-diphosphocytidyl-2-C-methyl-D-erythritol 2-phosphate (CDP-ME2P) to 2-C-methyl-D-erythritol 2,4-cyclodiphosphate (ME-CPP) with a corresponding release of cytidine 5-monophosphate (CMP). This chain is 2-C-methyl-D-erythritol 2,4-cyclodiphosphate synthase, found in Salmonella typhimurium (strain LT2 / SGSC1412 / ATCC 700720).